Here is a 413-residue protein sequence, read N- to C-terminus: Tyrosine--tRNA ligase (413 aa).

Positions 59 to 68 (PTAPDIHLGH) match the 'HIGH' region motif. The short motif at 243 to 247 (KMSKS) is the 'KMSKS' region element. Position 246 (lysine 246) interacts with ATP. The S4 RNA-binding domain occupies 351–411 (LAIGQLLKQA…GKRRFARVTL (61 aa)).

The protein belongs to the class-I aminoacyl-tRNA synthetase family. TyrS type 2 subfamily. Homodimer.

It is found in the cytoplasm. The catalysed reaction is tRNA(Tyr) + L-tyrosine + ATP = L-tyrosyl-tRNA(Tyr) + AMP + diphosphate + H(+). Catalyzes the attachment of tyrosine to tRNA(Tyr) in a two-step reaction: tyrosine is first activated by ATP to form Tyr-AMP and then transferred to the acceptor end of tRNA(Tyr). This is Tyrosine--tRNA ligase from Burkholderia pseudomallei (strain K96243).